A 389-amino-acid chain; its full sequence is Chalcone synthase 4-1 (389 aa).

Residue C164 is part of the active site.

The protein belongs to the thiolase-like superfamily. Chalcone/stilbene synthases family.

It carries out the reaction (E)-4-coumaroyl-CoA + 3 malonyl-CoA + 3 H(+) = 2',4,4',6'-tetrahydroxychalcone + 3 CO2 + 4 CoA. It participates in secondary metabolite biosynthesis; flavonoid biosynthesis. Its function is as follows. The primary product of this enzyme is 4,2',4',6'-tetrahydroxychalcone (also termed naringenin-chalcone or chalcone) which can under specific conditions spontaneously isomerize into naringenin. The protein is Chalcone synthase 4-1 (CHS4-1) of Medicago sativa (Alfalfa).